The sequence spans 93 residues: Small ribosomal subunit protein uS19 (93 aa).

This sequence belongs to the universal ribosomal protein uS19 family.

Protein S19 forms a complex with S13 that binds strongly to the 16S ribosomal RNA. This is Small ribosomal subunit protein uS19 from Agathobacter rectalis (strain ATCC 33656 / DSM 3377 / JCM 17463 / KCTC 5835 / VPI 0990) (Eubacterium rectale).